Reading from the N-terminus, the 493-residue chain is Dynein regulatory complex subunit 2 (493 aa).

Coiled coils occupy residues 99 to 163 (DSVI…RKLI) and 253 to 280 (KDEK…ILKG).

It belongs to the DRC2 family. In terms of assembly, component of the nexin-dynein regulatory complex (N-DRC). Interacts with DRC1.

Its subcellular location is the cytoplasm. It is found in the cytoskeleton. The protein localises to the flagellum basal body. It localises to the cell projection. The protein resides in the cilium. Its subcellular location is the flagellum. It is found in the flagellum axoneme. Its function is as follows. Component of the nexin-dynein regulatory complex (N-DRC), a key regulator of ciliary/flagellar motility which maintains the alignment and integrity of the distal axoneme and regulates microtubule sliding in motile axonemes. Plays a critical role in the assembly of N-DRC and also stabilizes the assembly of multiple inner dynein arms and radial spokes. Coassembles with DRC1 to form a central scaffold needed for assembly of the N-DRC and its attachment to the outer doublet microtubules. In Mus musculus (Mouse), this protein is Dynein regulatory complex subunit 2 (Ccdc65).